We begin with the raw amino-acid sequence, 843 residues long: Glycogen phosphorylase, brain form (843 aa).

Position 2 is an N-acetylalanine (Ala-2). Ser-15 is modified (phosphoserine; by PHK; in form phosphorylase A). Asp-43, Tyr-197, and Arg-310 together coordinate AMP. The residue at position 197 (Tyr-197) is a Phosphotyrosine. Tyr-473 carries the post-translational modification Phosphotyrosine. Lys-569 provides a ligand contact to pyridoxal 5'-phosphate. Positions 677 to 678 are pyridoxal 5'-phosphate; that stretch reads TG. Lys-681 is modified (N6-(pyridoxal phosphate)lysine).

This sequence belongs to the glycogen phosphorylase family. Homodimer. Dimers associate into a tetramer to form the enzymatically active phosphorylase A. It depends on pyridoxal 5'-phosphate as a cofactor. Post-translationally, phosphorylation of Ser-15 converts phosphorylase B (unphosphorylated) to phosphorylase A.

The catalysed reaction is [(1-&gt;4)-alpha-D-glucosyl](n) + phosphate = [(1-&gt;4)-alpha-D-glucosyl](n-1) + alpha-D-glucose 1-phosphate. Activity of phosphorylase is controlled both by allosteric means (through the non-covalent binding of metabolites) and by covalent modification. Thus AMP allosterically activates, whereas ATP, ADP, and glucose-6-phosphate allosterically inhibit, phosphorylase B. Glycogen phosphorylase that regulates glycogen mobilization. Phosphorylase is an important allosteric enzyme in carbohydrate metabolism. Enzymes from different sources differ in their regulatory mechanisms and in their natural substrates. However, all known phosphorylases share catalytic and structural properties. In Ovis aries (Sheep), this protein is Glycogen phosphorylase, brain form (PYGB).